A 162-amino-acid chain; its full sequence is Protein-export protein SecB (162 aa).

Belongs to the SecB family. Homotetramer, a dimer of dimers. One homotetramer interacts with 1 SecA dimer.

The protein resides in the cytoplasm. Functionally, one of the proteins required for the normal export of preproteins out of the cell cytoplasm. It is a molecular chaperone that binds to a subset of precursor proteins, maintaining them in a translocation-competent state. It also specifically binds to its receptor SecA. The sequence is that of Protein-export protein SecB from Pseudomonas savastanoi pv. phaseolicola (strain 1448A / Race 6) (Pseudomonas syringae pv. phaseolicola (strain 1448A / Race 6)).